The primary structure comprises 370 residues: Queuine tRNA-ribosyltransferase (370 aa).

The active-site Proton acceptor is the Asp89. Residues Asp89 to Phe93, Asp143, Gln185, and Gly212 each bind substrate. The interval Gly243–Asp249 is RNA binding. Asp262 functions as the Nucleophile in the catalytic mechanism. An RNA binding; important for wobble base 34 recognition region spans residues Thr267–Arg271. 4 residues coordinate Zn(2+): Cys300, Cys302, Cys305, and His331.

Belongs to the queuine tRNA-ribosyltransferase family. As to quaternary structure, homodimer. Within each dimer, one monomer is responsible for RNA recognition and catalysis, while the other monomer binds to the replacement base PreQ1. Zn(2+) serves as cofactor.

It catalyses the reaction 7-aminomethyl-7-carbaguanine + guanosine(34) in tRNA = 7-aminomethyl-7-carbaguanosine(34) in tRNA + guanine. It functions in the pathway tRNA modification; tRNA-queuosine biosynthesis. In terms of biological role, catalyzes the base-exchange of a guanine (G) residue with the queuine precursor 7-aminomethyl-7-deazaguanine (PreQ1) at position 34 (anticodon wobble position) in tRNAs with GU(N) anticodons (tRNA-Asp, -Asn, -His and -Tyr). Catalysis occurs through a double-displacement mechanism. The nucleophile active site attacks the C1' of nucleotide 34 to detach the guanine base from the RNA, forming a covalent enzyme-RNA intermediate. The proton acceptor active site deprotonates the incoming PreQ1, allowing a nucleophilic attack on the C1' of the ribose to form the product. After dissociation, two additional enzymatic reactions on the tRNA convert PreQ1 to queuine (Q), resulting in the hypermodified nucleoside queuosine (7-(((4,5-cis-dihydroxy-2-cyclopenten-1-yl)amino)methyl)-7-deazaguanosine). The polypeptide is Queuine tRNA-ribosyltransferase (Hydrogenovibrio crunogenus (strain DSM 25203 / XCL-2) (Thiomicrospira crunogena)).